The primary structure comprises 274 residues: MQYQHPSSSALGLSVPLYAPTPLQPVHPTPFYIDDILGRSSASNGTPALPTPTLPSPNSSFTSLVATYRTPIYEPTPIHPAFTHPGAALAASYGASTYANPLYPFSRPVSEYTHALIRHDTLGKPLLWSPFIQRPLHKRKGGQVRFSNDQTIELEKKFETQKYLSPPERKRLAKMLQLSERQVKTWFQNRRAKWRRLKQENPQGNKKDETESLENICEESQERCLSAEQKSRESSLDEPTSSPTSQETLDSEVSDDSDQEVDIEGDKGFYNCAH.

The segment at residues R139–K198 is a DNA-binding region (homeobox). The disordered stretch occupies residues L197–H274. A compositionally biased stretch (polar residues) spans D237–T248. Residues L249–I263 show a composition bias toward acidic residues.

As to expression, expressed in the most dorsoanterior endomesoderm of the blastula and gastrula embryo, and later is restricted to the forming liver diverticulum.

The protein localises to the nucleus. Its function is as follows. Recognizes the DNA sequence 5'-ATTAA-3'. Transcriptional repressor. Regulates the differentiation of both endothelial and blood cells. Probably plays a role in the proliferation of vascular endothelial cells during blood vessel development. Establishes anterior identity at two levels; acts early to enhance canonical wnt-signaling by repressing expression of tle4, and acts later to inhibit nodal-signaling by directly targeting nodal/nr1 and nodal2/nr2. May play a role in liver development. Induces heart development. In Xenopus tropicalis (Western clawed frog), this protein is Hematopoietically-expressed homeobox protein hhex.